A 315-amino-acid chain; its full sequence is Ribosomal RNA small subunit methyltransferase H (315 aa).

S-adenosyl-L-methionine contacts are provided by residues Gly33 to His35, Asp52, Phe84, Asp106, and Gln113. The tract at residues Ser294 to Leu315 is disordered.

The protein belongs to the methyltransferase superfamily. RsmH family.

Its subcellular location is the cytoplasm. The enzyme catalyses cytidine(1402) in 16S rRNA + S-adenosyl-L-methionine = N(4)-methylcytidine(1402) in 16S rRNA + S-adenosyl-L-homocysteine + H(+). Functionally, specifically methylates the N4 position of cytidine in position 1402 (C1402) of 16S rRNA. This Lactobacillus johnsonii (strain CNCM I-12250 / La1 / NCC 533) protein is Ribosomal RNA small subunit methyltransferase H.